Consider the following 149-residue polypeptide: UPF0260 protein RCAP_rcc02083 (149 aa).

It belongs to the UPF0260 family.

This is UPF0260 protein RCAP_rcc02083 from Rhodobacter capsulatus (strain ATCC BAA-309 / NBRC 16581 / SB1003).